The sequence spans 66 residues: Large ribosomal subunit protein bL28 (66 aa).

Residues Met-1–Arg-26 form a disordered region. Positions Phe-13–Arg-25 are enriched in polar residues.

This sequence belongs to the bacterial ribosomal protein bL28 family.

This is Large ribosomal subunit protein bL28 from Leuconostoc mesenteroides subsp. mesenteroides (strain ATCC 8293 / DSM 20343 / BCRC 11652 / CCM 1803 / JCM 6124 / NCDO 523 / NBRC 100496 / NCIMB 8023 / NCTC 12954 / NRRL B-1118 / 37Y).